The following is a 298-amino-acid chain: Glycine--tRNA ligase alpha subunit (298 aa).

Belongs to the class-II aminoacyl-tRNA synthetase family. As to quaternary structure, tetramer of two alpha and two beta subunits.

It localises to the cytoplasm. It carries out the reaction tRNA(Gly) + glycine + ATP = glycyl-tRNA(Gly) + AMP + diphosphate. In Helicobacter hepaticus (strain ATCC 51449 / 3B1), this protein is Glycine--tRNA ligase alpha subunit.